A 365-amino-acid chain; its full sequence is Alanine racemase (365 aa).

The Proton acceptor; specific for D-alanine role is filled by Lys35. Lys35 is subject to N6-(pyridoxal phosphate)lysine. Residue Arg130 participates in substrate binding. Tyr256 acts as the Proton acceptor; specific for L-alanine in catalysis. Position 304 (Met304) interacts with substrate.

Belongs to the alanine racemase family. The cofactor is pyridoxal 5'-phosphate.

It carries out the reaction L-alanine = D-alanine. It functions in the pathway amino-acid biosynthesis; D-alanine biosynthesis; D-alanine from L-alanine: step 1/1. Functionally, catalyzes the interconversion of L-alanine and D-alanine. May also act on other amino acids. The chain is Alanine racemase (alr) from Acidovorax sp. (strain JS42).